We begin with the raw amino-acid sequence, 581 residues long: Prolactin receptor (581 aa).

The signal sequence occupies residues 1-24 (MKENAASRVLFILLLFLFASLLNG). Residues 25–237 (QSPPEKPKLI…NDFPVKDTSM (213 aa)) lie on the Extracellular side of the membrane. Fibronectin type-III domains follow at residues 27-127 (PPEK…IVEP) and 129-229 (PPVN…IPND). The cysteines at positions 36 and 46 are disulfide-linked. N-linked (GlcNAc...) asparagine glycosylation is present at N59. C75 and C86 are joined by a disulfide. The N-linked (GlcNAc...) asparagine glycan is linked to N132. Residues D211 and H212 each coordinate Zn(2+). Positions 215-219 (WSEWS) match the WSXWS motif motif. A helical membrane pass occupies residues 238–258 (WIFVGVLSAVICLIMVWAVAL). At 259-581 (KGYSMVTCIL…SAKKAPPALP (323 aa)) the chain is on the cytoplasmic side. The Box 1 motif signature appears at 267 to 275 (ILPPVPGPK). Composition is skewed to basic and acidic residues over residues 323–349 (QHLM…DTDS) and 375–388 (HIPE…DPET). Disordered regions lie at residues 323 to 388 (QHLM…DPET) and 462 to 492 (FKPS…PDQD).

Belongs to the type I cytokine receptor family. Type 1 subfamily. As to quaternary structure, interacts with SMARCA1. Interacts with NEK3 and VAV2 and this interaction is prolactin-dependent. In terms of tissue distribution, expressed in all tissues examined; liver, pituitary, adrenal gland, ovary and fetal liver.

The protein resides in the membrane. In terms of biological role, this is a receptor for the anterior pituitary hormone prolactin. This Ovis aries (Sheep) protein is Prolactin receptor (PRLR).